The chain runs to 195 residues: Endoribonuclease YbeY (195 aa).

Zn(2+) contacts are provided by His152, His156, and His162.

This sequence belongs to the endoribonuclease YbeY family. It depends on Zn(2+) as a cofactor.

The protein resides in the cytoplasm. Its function is as follows. Single strand-specific metallo-endoribonuclease involved in late-stage 70S ribosome quality control and in maturation of the 3' terminus of the 16S rRNA. This chain is Endoribonuclease YbeY, found in Rhodopseudomonas palustris (strain HaA2).